The chain runs to 519 residues: Ribonuclease Y (519 aa).

The helical transmembrane segment at 3–23 (PLAILISILLSLFCLVVGYYV) threads the bilayer. The region spanning 209 to 272 (TVSVVNLPND…ETARIALDKL (64 aa)) is the KH domain. One can recognise an HD domain in the interval 335–428 (VLKHSMEVAF…VAAADALSAA (94 aa)).

Belongs to the RNase Y family.

It is found in the cell membrane. Functionally, endoribonuclease that initiates mRNA decay. The chain is Ribonuclease Y from Bacillus licheniformis (strain ATCC 14580 / DSM 13 / JCM 2505 / CCUG 7422 / NBRC 12200 / NCIMB 9375 / NCTC 10341 / NRRL NRS-1264 / Gibson 46).